The primary structure comprises 215 residues: Deoxyribose-phosphate aldolase (215 aa).

D90 serves as the catalytic Proton donor/acceptor. K152 serves as the catalytic Schiff-base intermediate with acetaldehyde. Residue K181 is the Proton donor/acceptor of the active site.

Belongs to the DeoC/FbaB aldolase family. DeoC type 1 subfamily.

The protein localises to the cytoplasm. The catalysed reaction is 2-deoxy-D-ribose 5-phosphate = D-glyceraldehyde 3-phosphate + acetaldehyde. It functions in the pathway carbohydrate degradation; 2-deoxy-D-ribose 1-phosphate degradation; D-glyceraldehyde 3-phosphate and acetaldehyde from 2-deoxy-alpha-D-ribose 1-phosphate: step 2/2. In terms of biological role, catalyzes a reversible aldol reaction between acetaldehyde and D-glyceraldehyde 3-phosphate to generate 2-deoxy-D-ribose 5-phosphate. This is Deoxyribose-phosphate aldolase from Ureaplasma parvum serovar 3 (strain ATCC 27815 / 27 / NCTC 11736).